Reading from the N-terminus, the 758-residue chain is 5-methyltetrahydropteroyltriglutamate--homocysteine methyltransferase (758 aa).

5-methyltetrahydropteroyltri-L-glutamate contacts are provided by residues 16–19 (RELK) and Lys117. L-homocysteine is bound by residues 436-438 (IGS) and Glu489. L-methionine contacts are provided by residues 436–438 (IGS) and Glu489. Residues 520-521 (RC) and Trp566 each bind 5-methyltetrahydropteroyltri-L-glutamate. Residue Asp604 participates in L-homocysteine binding. Asp604 is an L-methionine binding site. Glu610 contacts 5-methyltetrahydropteroyltri-L-glutamate. Zn(2+) is bound by residues His646, Cys648, and Glu670. Residue His699 is the Proton donor of the active site. Cys731 lines the Zn(2+) pocket.

It belongs to the vitamin-B12 independent methionine synthase family. Zn(2+) serves as cofactor.

It catalyses the reaction 5-methyltetrahydropteroyltri-L-glutamate + L-homocysteine = tetrahydropteroyltri-L-glutamate + L-methionine. It functions in the pathway amino-acid biosynthesis; L-methionine biosynthesis via de novo pathway; L-methionine from L-homocysteine (MetE route): step 1/1. Catalyzes the transfer of a methyl group from 5-methyltetrahydrofolate to homocysteine resulting in methionine formation. This is 5-methyltetrahydropteroyltriglutamate--homocysteine methyltransferase from Ruthia magnifica subsp. Calyptogena magnifica.